The sequence spans 602 residues: Elongation factor 4 (602 aa).

The region spanning 8–189 (KNIRNFSIIA…KIITTIPAPS (182 aa)) is the tr-type G domain. GTP contacts are provided by residues 20-25 (DHGKST) and 136-139 (NKID).

The protein belongs to the TRAFAC class translation factor GTPase superfamily. Classic translation factor GTPase family. LepA subfamily.

It localises to the cell inner membrane. It carries out the reaction GTP + H2O = GDP + phosphate + H(+). Its function is as follows. Required for accurate and efficient protein synthesis under certain stress conditions. May act as a fidelity factor of the translation reaction, by catalyzing a one-codon backward translocation of tRNAs on improperly translocated ribosomes. Back-translocation proceeds from a post-translocation (POST) complex to a pre-translocation (PRE) complex, thus giving elongation factor G a second chance to translocate the tRNAs correctly. Binds to ribosomes in a GTP-dependent manner. The polypeptide is Elongation factor 4 (Helicobacter pylori (strain Shi470)).